The sequence spans 610 residues: DNA replication regulator sld2 (610 aa).

Positions 28–42 (WAQKNDGKKPSREAI) are enriched in basic and acidic residues. Disordered stretches follow at residues 28 to 115 (WAQK…AVHE), 127 to 261 (SPAV…ERSV), and 338 to 610 (EQGG…RRRR). Composition is skewed to polar residues over residues 86–110 (ETSLPSASTPSKRNRSAATPKSQHY) and 232–261 (TKTSTPLNKNTGNSPSKNNLTKTPSGERSV). Acidic residues-rich tracts occupy residues 373 to 386 (VPEEENSFEEDEAA) and 414 to 428 (FDDENFYDSQDEEDL). The span at 442–464 (VFKKKGQKRTTRKVNMRPTRTKR) shows a compositional bias: basic residues. Positions 470–480 (AEEEDDGEEEH) are enriched in acidic residues. The segment covering 493-503 (KNLDGDDHHTL) has biased composition (basic and acidic residues). The segment covering 514-527 (EFDDGSEGEDEEAE) has biased composition (acidic residues). The segment covering 544–573 (SAKEKTKKDATTETKKKKGTKEGGDEEPAK) has biased composition (basic and acidic residues).

This sequence belongs to the SLD2 family.

Its subcellular location is the cytoplasm. It localises to the nucleus. Its function is as follows. Has a role in the initiation of DNA replication. Required at S-phase checkpoint. This is DNA replication regulator sld2 (drc-4) from Neurospora crassa (strain ATCC 24698 / 74-OR23-1A / CBS 708.71 / DSM 1257 / FGSC 987).